The chain runs to 340 residues: Guanine nucleotide-binding protein G(I)/G(S)/G(T) subunit beta-2 (340 aa).

Residue Ser-2 is modified to N-acetylserine. WD repeat units follow at residues Gly-53–Asp-83, Leu-95–Ser-125, Gly-141–Asp-170, Gly-182–Asp-212, Gly-224–Asp-254, Asn-268–Asp-298, and Gly-310–Asn-340. A Phosphotyrosine modification is found at Tyr-239.

This sequence belongs to the WD repeat G protein beta family. As to quaternary structure, g proteins are composed of 3 units, alpha, beta and gamma. In this context, interacts with GNAI2 and GNG2. Interacts with ARHGEF18 and RASD2. Interacts with ATXN10. Interacts with SCN8A. Expressed in all cardiac subcompartments and in the brain, with highest levels in the atrioventricular node and brain.

Its subcellular location is the cytoplasm. The protein resides in the perinuclear region. It localises to the cell membrane. Functionally, guanine nucleotide-binding proteins (G proteins) are involved as a modulator or transducer in various transmembrane signaling systems. The beta and gamma chains are required for the GTPase activity, for replacement of GDP by GTP, and for G protein-effector interaction. This Homo sapiens (Human) protein is Guanine nucleotide-binding protein G(I)/G(S)/G(T) subunit beta-2 (GNB2).